Consider the following 315-residue polypeptide: Biotin synthase (315 aa).

The Radical SAM core domain occupies 39-266; the sequence is NSLQFATLLS…KSAIRLTAGR (228 aa). Positions 54, 58, and 61 each coordinate [4Fe-4S] cluster. [2Fe-2S] cluster-binding residues include cysteine 98, cysteine 129, cysteine 189, and arginine 261.

It belongs to the radical SAM superfamily. Biotin synthase family. As to quaternary structure, homodimer. Requires [4Fe-4S] cluster as cofactor. The cofactor is [2Fe-2S] cluster.

It carries out the reaction (4R,5S)-dethiobiotin + (sulfur carrier)-SH + 2 reduced [2Fe-2S]-[ferredoxin] + 2 S-adenosyl-L-methionine = (sulfur carrier)-H + biotin + 2 5'-deoxyadenosine + 2 L-methionine + 2 oxidized [2Fe-2S]-[ferredoxin]. It participates in cofactor biosynthesis; biotin biosynthesis; biotin from 7,8-diaminononanoate: step 2/2. Catalyzes the conversion of dethiobiotin (DTB) to biotin by the insertion of a sulfur atom into dethiobiotin via a radical-based mechanism. In Legionella pneumophila (strain Lens), this protein is Biotin synthase.